The chain runs to 521 residues: Cytochrome P450 monooxygenase gloO (521 aa).

The first 26 residues, Met1–Ala26, serve as a signal peptide directing secretion. Position 464 (Cys464) interacts with heme.

It belongs to the cytochrome P450 family. The cofactor is heme.

Its pathway is mycotoxin biosynthesis. Cytochrome P450 monooxygenase; part of the gene cluster that mediates the biosynthesis of pneumocandins, lipohexapeptides of the echinocandin family that prevent fungal cell wall formation by non-competitive inhibition of beta-1,3-glucan synthase. The 10,12-dimethylmyristoyl side chain is synthesized by the reducing polyketide synthase gloL/GLPKS4. The thioesterase gloN/GLHYD exclusively interacts with gloL/GLPKS4 to maintain turnover of the polyketide side chain. The 10R,12S-dimethylmyristic acid is then transferred to the first thiolation domain of the nonribosomal peptide synthetase gloA/GLNRPS4 by the acyl-AMP ligase gloD/GLligase, followed by its acylation to L-ornithine to trigger elongation of the cyclic hexapeptide. L-ornithine, 4R-hydroxyl-L-proline (generated from L-proline by the dioxygenase gloF/GLOXY2), 3S-hydroxyl-L-homotyrosine (generated by gloG/GLHtyB, gloH/GLHtyA, gloI/GLHtyC, gloJ/GLHtyD and hydroxylated at C-3 by the dioxygenase gloM/GLOXY1), 3R-hydroxyl-L-glutamine (generated from L-glutamine probably by the dioxygenase gloE/GLOXY3) and 3S-hydroxyl-L-proline (generated from L-proline by the dioxygenase gloF/GLOXY2 to yield pneumocandin B0), or 3S-hydroxyl-4S-methyl-L-proline (generated from L-leucine by the dioxygenase gloC/GLOXY4 to yield pneumocandin A0) are sequentially added to the growing chain. The last C domain of gloA/GLNRPS4 is proposed to be responsible for cyclization by condensation to form the peptide bond between L-ornithine and 3S-hydroxyl-4S-methyl-L-proline (for pneumocandin A0) or 3S-hydroxyl-L-proline (for pneumocandin B0). Finally, the subsequent C-4 hydroxylation of 3S-hydroxyl-L-homotyrosine and L-ornithine dihydroxylation at C-4 and C-5 are performed by the cytochrome P450 monooxygenases gloP/GLP450-1 and gloO/GLP450-2, respectively. In Glarea lozoyensis (strain ATCC 20868 / MF5171), this protein is Cytochrome P450 monooxygenase gloO.